The following is a 382-amino-acid chain: Galactokinase (382 aa).

34-37 (EHTD) provides a ligand contact to substrate. ATP is bound at residue 124 to 130 (GAGLSSS). Residues serine 130 and glutamate 162 each contribute to the Mg(2+) site. Residue aspartate 174 is the Proton acceptor of the active site. Residue tyrosine 223 participates in substrate binding.

The protein belongs to the GHMP kinase family. GalK subfamily.

The protein resides in the cytoplasm. The catalysed reaction is alpha-D-galactose + ATP = alpha-D-galactose 1-phosphate + ADP + H(+). Its pathway is carbohydrate metabolism; galactose metabolism. Its function is as follows. Catalyzes the transfer of the gamma-phosphate of ATP to D-galactose to form alpha-D-galactose-1-phosphate (Gal-1-P). The sequence is that of Galactokinase from Salmonella paratyphi A (strain ATCC 9150 / SARB42).